We begin with the raw amino-acid sequence, 125 residues long: Small ribosomal subunit protein uS13 (125 aa).

The interval 91–125 (HRRSLPVRGQNTQTNARTRKGKRKTVAGKKKAARK) is disordered. Residues 107 to 125 (RTRKGKRKTVAGKKKAARK) show a composition bias toward basic residues.

The protein belongs to the universal ribosomal protein uS13 family. Part of the 30S ribosomal subunit. Forms a loose heterodimer with protein S19. Forms two bridges to the 50S subunit in the 70S ribosome.

In terms of biological role, located at the top of the head of the 30S subunit, it contacts several helices of the 16S rRNA. In the 70S ribosome it contacts the 23S rRNA (bridge B1a) and protein L5 of the 50S subunit (bridge B1b), connecting the 2 subunits; these bridges are implicated in subunit movement. Contacts the tRNAs in the A and P-sites. The sequence is that of Small ribosomal subunit protein uS13 from Chlorobium phaeovibrioides (strain DSM 265 / 1930) (Prosthecochloris vibrioformis (strain DSM 265)).